The following is a 107-amino-acid chain: Large ribosomal subunit protein uL24 (107 aa).

Belongs to the universal ribosomal protein uL24 family. In terms of assembly, part of the 50S ribosomal subunit.

One of two assembly initiator proteins, it binds directly to the 5'-end of the 23S rRNA, where it nucleates assembly of the 50S subunit. Its function is as follows. One of the proteins that surrounds the polypeptide exit tunnel on the outside of the subunit. The protein is Large ribosomal subunit protein uL24 of Natranaerobius thermophilus (strain ATCC BAA-1301 / DSM 18059 / JW/NM-WN-LF).